Reading from the N-terminus, the 147-residue chain is VEWTDGERTAILTLWKKINVEEIGAQAMGRLLIVYPWTHRHFASFGNLSTPSAIMSNDKVAKHGATVMGGLDKAIKNMDDIKNAYRDLSVMHSEKLHVDPDNFRLLSECITLCVAAKFGPKEFNADVHEAWYKFLMAVTSALARQYH.

Residues 2-147 (EWTDGERTAI…VTSALARQYH (146 aa)) form the Globin domain. Residues histidine 63 and histidine 92 each contribute to the heme b site.

Belongs to the globin family. In terms of assembly, heterotetramer of two alpha chains and two beta chains. In terms of tissue distribution, red blood cells.

Involved in oxygen transport from gills to the various peripheral tissues. The chain is Hemoglobin anodic subunit beta from Gymnothorax unicolor (Brown moray).